The following is a 179-amino-acid chain: GTP-dependent dephospho-CoA kinase (179 aa).

Asp55, Val57, Asp74, Lys76, and Glu128 together coordinate GTP.

This sequence belongs to the GTP-dependent DPCK family.

The catalysed reaction is 3'-dephospho-CoA + GTP = GDP + CoA + H(+). The protein operates within cofactor biosynthesis; coenzyme A biosynthesis. In terms of biological role, catalyzes the GTP-dependent phosphorylation of the 3'-hydroxyl group of dephosphocoenzyme A to form coenzyme A (CoA). This Saccharolobus islandicus (strain M.16.27) (Sulfolobus islandicus) protein is GTP-dependent dephospho-CoA kinase.